The following is a 967-amino-acid chain: Alanine--tRNA ligase, cytoplasmic (967 aa).

Residues His605, His609, Cys724, and His728 each contribute to the Zn(2+) site.

The protein belongs to the class-II aminoacyl-tRNA synthetase family. Monomer. Zn(2+) is required as a cofactor. The N-terminus is blocked.

Its subcellular location is the cytoplasm. It carries out the reaction tRNA(Ala) + L-alanine + ATP = L-alanyl-tRNA(Ala) + AMP + diphosphate. In terms of biological role, catalyzes the attachment of alanine to tRNA(Ala) in a two-step reaction: alanine is first activated by ATP to form Ala-AMP and then transferred to the acceptor end of tRNA(Ala). Also edits incorrectly charged tRNA(Ala) via its editing domain. This is Alanine--tRNA ligase, cytoplasmic from Bombyx mori (Silk moth).